The primary structure comprises 128 residues: Azurin (128 aa).

The Plastocyanin-like domain maps to 1 to 128 (AECSVDIQGN…AMMKGTLTLK (128 aa)). Positions 46, 112, 117, and 121 each coordinate Cu cation.

It localises to the periplasm. In terms of biological role, transfers electrons from cytochrome c551 to cytochrome oxidase. This chain is Azurin, found in Pseudomonas denitrificans.